Reading from the N-terminus, the 275-residue chain is MTLQQQIIKALGAKPQINAEEEIRRSVDFLKSYLQTYPFIKSLVLGISGGQDSTLAGKLCQMAINELRQETGNESLQFIAVRLPYGVQADEQDCQDAIAFIQPDRVLTVNIKGAVLASEQALREAGIELSDFVRGNEKARERMKAQYSIAGMTSGVVVGTDHAAEAITGFFTKYGDGGTDINPLYRLNKRQGKQLLAALACPEHLYKKAPTADLEDDRPSLPDEVALGVTYDNIDDYLEGKNVPQQVARTIENWYLKTEHKRRPPITVFDDFWKK.

46–53 (GISGGQDS) provides a ligand contact to ATP. A Mg(2+)-binding site is contributed by Asp52. A deamido-NAD(+)-binding site is contributed by Arg140. Thr160 contributes to the ATP binding site. Glu165 is a Mg(2+) binding site. Deamido-NAD(+)-binding residues include Lys173 and Asp180. Residues Lys189 and Thr211 each coordinate ATP. Deamido-NAD(+) is bound at residue 260 to 261 (HK).

This sequence belongs to the NAD synthetase family. As to quaternary structure, homodimer.

It carries out the reaction deamido-NAD(+) + NH4(+) + ATP = AMP + diphosphate + NAD(+) + H(+). It participates in cofactor biosynthesis; NAD(+) biosynthesis; NAD(+) from deamido-NAD(+) (ammonia route): step 1/1. Catalyzes the ATP-dependent amidation of deamido-NAD to form NAD. Uses ammonia as a nitrogen source. The protein is NH(3)-dependent NAD(+) synthetase of Shigella boydii serotype 4 (strain Sb227).